The chain runs to 71 residues: Exodeoxyribonuclease 7 small subunit (71 aa).

It belongs to the XseB family. Heterooligomer composed of large and small subunits.

It is found in the cytoplasm. The enzyme catalyses Exonucleolytic cleavage in either 5'- to 3'- or 3'- to 5'-direction to yield nucleoside 5'-phosphates.. Bidirectionally degrades single-stranded DNA into large acid-insoluble oligonucleotides, which are then degraded further into small acid-soluble oligonucleotides. The chain is Exodeoxyribonuclease 7 small subunit from Streptococcus thermophilus (strain ATCC BAA-250 / LMG 18311).